Reading from the N-terminus, the 232-residue chain is Large ribosomal subunit protein uL3 (232 aa).

This sequence belongs to the universal ribosomal protein uL3 family. In terms of assembly, part of the 50S ribosomal subunit. Forms a cluster with proteins L14 and L19.

Its function is as follows. One of the primary rRNA binding proteins, it binds directly near the 3'-end of the 23S rRNA, where it nucleates assembly of the 50S subunit. The chain is Large ribosomal subunit protein uL3 from Hydrogenobaculum sp. (strain Y04AAS1).